The primary structure comprises 160 residues: Nascent polypeptide-associated complex subunit alpha (160 aa).

Residues 10–75 form the NAC-A/B domain; sequence TKGEKKTREA…HSFDDIASRL (66 aa). Residues 120–159 form the UBA domain; sequence VNPKDVEVVMKETKASREKVVETLIATKNDLVSAVLELTT.

This sequence belongs to the NAC-alpha family. In terms of assembly, part of the nascent polypeptide-associated complex (NAC), consisting of nacA and nacB.

It localises to the cytoplasm. Its subcellular location is the nucleus. Component of the nascent polypeptide-associated complex (NAC), a dynamic component of the ribosomal exit tunnel, protecting the emerging polypeptides from interaction with other cytoplasmic proteins to ensure appropriate nascent protein targeting. The NAC complex also promotes mitochondrial protein import by enhancing productive ribosome interactions with the outer mitochondrial membrane and blocks the inappropriate interaction of ribosomes translating non-secretory nascent polypeptides with translocation sites in the membrane of the endoplasmic reticulum. May also be involved in transcription regulation. The chain is Nascent polypeptide-associated complex subunit alpha (nacA) from Dictyostelium discoideum (Social amoeba).